Reading from the N-terminus, the 309-residue chain is MICFLLIILSILVVFAFVLGNFSNGFIALVNVIDWVKRQKISSADQILTALVVSRVGLLWVILLHWYSNVLNSALYSSEVIIFISNAWAIINHFSIWLATSLSIFYLLKIVNFSRLIFHHLKRKAKSVVLVIVLGPLVFLVCHLVMKHTYINVWTKEYEGNVTWKIKLRNAIHLSNLTVSTLANLIPFTLTLISFLLLIYSLCKHLKKMQLHGKGSQDPSTKVHIKALQTVTSFLLLCAIYFLSMIISVCNFGRLEKQPVFMFCQAIIFSYPSTHPFILILGNKKLKQIFLSVFWQMRYWVKGEKPSSP.

A topological domain (extracellular) is located at residue M1. Residues 2-22 (ICFLLIILSILVVFAFVLGNF) traverse the membrane as a helical segment. Residues 23-46 (SNGFIALVNVIDWVKRQKISSADQ) are Cytoplasmic-facing. A helical transmembrane segment spans residues 47–67 (ILTALVVSRVGLLWVILLHWY). Over 68–79 (SNVLNSALYSSE) the chain is Extracellular. A helical membrane pass occupies residues 80-100 (VIIFISNAWAIINHFSIWLAT). Residues 101–126 (SLSIFYLLKIVNFSRLIFHHLKRKAK) lie on the Cytoplasmic side of the membrane. The chain crosses the membrane as a helical span at residues 127-147 (SVVLVIVLGPLVFLVCHLVMK). At 148-181 (HTYINVWTKEYEGNVTWKIKLRNAIHLSNLTVST) the chain is on the extracellular side. N161 and N176 each carry an N-linked (GlcNAc...) asparagine glycan. Residues 182–202 (LANLIPFTLTLISFLLLIYSL) traverse the membrane as a helical segment. The Cytoplasmic segment spans residues 203-229 (CKHLKKMQLHGKGSQDPSTKVHIKALQ). The chain crosses the membrane as a helical span at residues 230-250 (TVTSFLLLCAIYFLSMIISVC). Residues 251–259 (NFGRLEKQP) lie on the Extracellular side of the membrane. A helical transmembrane segment spans residues 260–280 (VFMFCQAIIFSYPSTHPFILI). Residues 281 to 309 (LGNKKLKQIFLSVFWQMRYWVKGEKPSSP) are Cytoplasmic-facing.

This sequence belongs to the G-protein coupled receptor T2R family.

It localises to the membrane. Its function is as follows. Putative taste receptor which may play a role in the perception of bitterness. The chain is Putative taste receptor type 2 member 36 from Homo sapiens (Human).